The following is a 167-amino-acid chain: Urease accessory protein UreE (167 aa).

It belongs to the UreE family.

The protein localises to the cytoplasm. In terms of biological role, involved in urease metallocenter assembly. Binds nickel. Probably functions as a nickel donor during metallocenter assembly. This Pseudomonas paraeruginosa (strain DSM 24068 / PA7) (Pseudomonas aeruginosa (strain PA7)) protein is Urease accessory protein UreE.